We begin with the raw amino-acid sequence, 317 residues long: Anamorsin homolog (317 aa).

The N-terminal SAM-like domain stretch occupies residues 1–192; the sequence is MREVLVVSES…ITGVRPNWKA (192 aa). The tract at residues 193–216 is linker; that stretch reads KGDRKSSSIHAAPIDGYISKAPDY. Cys-219, Cys-226, Cys-229, and Cys-231 together coordinate [2Fe-2S] cluster. The segment at 219-231 is fe-S binding site A; it reads CSTKPRACANCTC. 4 residues coordinate [4Fe-4S] cluster: Cys-286, Cys-289, Cys-297, and Cys-300. Short sequence motifs (cx2C motif) lie at residues 286–289 and 297–300; these read CGNC and CDSC. The fe-S binding site B stretch occupies residues 286 to 300; the sequence is CGNCYLGDAFRCDSC.

This sequence belongs to the anamorsin family. In terms of assembly, monomer. [2Fe-2S] cluster serves as cofactor. The cofactor is [4Fe-4S] cluster.

Its subcellular location is the cytoplasm. The protein resides in the mitochondrion intermembrane space. Functionally, component of the cytosolic iron-sulfur (Fe-S) protein assembly (CIA) machinery. Required for the maturation of extramitochondrial Fe-S proteins. Part of an electron transfer chain functioning in an early step of cytosolic Fe-S biogenesis, facilitating the de novo assembly of a [4Fe-4S] cluster on the cytosolic Fe-S scaffold complex. Electrons are transferred from NADPH via a FAD- and FMN-containing diflavin oxidoreductase. Together with the diflavin oxidoreductase, also required for the assembly of the diferric tyrosyl radical cofactor of ribonucleotide reductase (RNR), probably by providing electrons for reduction during radical cofactor maturation in the catalytic small subunit. The chain is Anamorsin homolog from Theileria parva (East coast fever infection agent).